Reading from the N-terminus, the 524-residue chain is Glutamyl-tRNA(Gln) amidotransferase subunit A, mitochondrial (524 aa).

Active-site charge relay system residues include Lys76 and Ser171. Ser195 acts as the Acyl-ester intermediate in catalysis.

The protein belongs to the amidase family. GatA subfamily. As to quaternary structure, subunit of the heterotrimeric GatCAB amidotransferase (AdT) complex, composed of A (qrsl1), B (gatb) and C (gatc) subunits.

It is found in the mitochondrion. The enzyme catalyses L-glutamyl-tRNA(Gln) + L-glutamine + ATP + H2O = L-glutaminyl-tRNA(Gln) + L-glutamate + ADP + phosphate + H(+). Allows the formation of correctly charged Gln-tRNA(Gln) through the transamidation of misacylated Glu-tRNA(Gln) in the mitochondria. The reaction takes place in the presence of glutamine and ATP through an activated gamma-phospho-Glu-tRNA(Gln). The protein is Glutamyl-tRNA(Gln) amidotransferase subunit A, mitochondrial (qrsl1) of Xenopus tropicalis (Western clawed frog).